A 511-amino-acid chain; its full sequence is Bifunctional purine biosynthesis protein PurH (511 aa).

An MGS-like domain is found at M1 to V145.

Belongs to the PurH family.

It catalyses the reaction (6R)-10-formyltetrahydrofolate + 5-amino-1-(5-phospho-beta-D-ribosyl)imidazole-4-carboxamide = 5-formamido-1-(5-phospho-D-ribosyl)imidazole-4-carboxamide + (6S)-5,6,7,8-tetrahydrofolate. It carries out the reaction IMP + H2O = 5-formamido-1-(5-phospho-D-ribosyl)imidazole-4-carboxamide. It participates in purine metabolism; IMP biosynthesis via de novo pathway; 5-formamido-1-(5-phospho-D-ribosyl)imidazole-4-carboxamide from 5-amino-1-(5-phospho-D-ribosyl)imidazole-4-carboxamide (10-formyl THF route): step 1/1. The protein operates within purine metabolism; IMP biosynthesis via de novo pathway; IMP from 5-formamido-1-(5-phospho-D-ribosyl)imidazole-4-carboxamide: step 1/1. In Bacillus cereus (strain ZK / E33L), this protein is Bifunctional purine biosynthesis protein PurH.